A 113-amino-acid chain; its full sequence is U11-theraphotoxin-Hhn1a (113 aa).

Residues 1–21 (MNTVRVTFLLVFVLPVSLGQA) form the signal peptide. Residues 22-74 (DKDENRMEMQEKTEQGKSYLDFAENLLLQKLEELEAKLLEEDSEESRNSRQKR) constitute a propeptide that is removed on maturation. The segment covering 60-69 (LEEDSEESRN) has biased composition (basic and acidic residues). Residues 60 to 83 (LEEDSEESRNSRQKRCIGEGVPCD) form a disordered region. 3 cysteine pairs are disulfide-bonded: C75/C90, C82/C95, and C89/C110.

This sequence belongs to the neurotoxin 14 (magi-1) family. 01 (HNTX-16) subfamily. As to expression, expressed by the venom gland.

The protein localises to the secreted. Its function is as follows. Probable ion channel inhibitor. The polypeptide is U11-theraphotoxin-Hhn1a (Cyriopagopus hainanus (Chinese bird spider)).